A 217-amino-acid polypeptide reads, in one-letter code: Uracil-DNA glycosylase (217 aa).

Asp-62 acts as the Proton acceptor in catalysis.

This sequence belongs to the uracil-DNA glycosylase (UDG) superfamily. UNG family.

The protein localises to the cytoplasm. It catalyses the reaction Hydrolyzes single-stranded DNA or mismatched double-stranded DNA and polynucleotides, releasing free uracil.. Excises uracil residues from the DNA which can arise as a result of misincorporation of dUMP residues by DNA polymerase or due to deamination of cytosine. This is Uracil-DNA glycosylase from Streptococcus equi subsp. zooepidemicus (strain H70).